Consider the following 284-residue polypeptide: Bifunctional protein FolD (284 aa).

Residues 166–168, Ser-191, and Ile-232 contribute to the NADP(+) site; that span reads GAS.

This sequence belongs to the tetrahydrofolate dehydrogenase/cyclohydrolase family. Homodimer.

It catalyses the reaction (6R)-5,10-methylene-5,6,7,8-tetrahydrofolate + NADP(+) = (6R)-5,10-methenyltetrahydrofolate + NADPH. The enzyme catalyses (6R)-5,10-methenyltetrahydrofolate + H2O = (6R)-10-formyltetrahydrofolate + H(+). It participates in one-carbon metabolism; tetrahydrofolate interconversion. Catalyzes the oxidation of 5,10-methylenetetrahydrofolate to 5,10-methenyltetrahydrofolate and then the hydrolysis of 5,10-methenyltetrahydrofolate to 10-formyltetrahydrofolate. In Thiobacillus denitrificans (strain ATCC 25259 / T1), this protein is Bifunctional protein FolD.